A 379-amino-acid chain; its full sequence is 23S rRNA (uracil(747)-C(5))-methyltransferase RlmC (379 aa).

[4Fe-4S] cluster contacts are provided by Cys3, Cys11, Cys14, and Cys87. 4 residues coordinate S-adenosyl-L-methionine: Gln212, Phe241, Glu262, and Asn309. The active-site Nucleophile is Cys336.

This sequence belongs to the class I-like SAM-binding methyltransferase superfamily. RNA M5U methyltransferase family. RlmC subfamily.

It carries out the reaction uridine(747) in 23S rRNA + S-adenosyl-L-methionine = 5-methyluridine(747) in 23S rRNA + S-adenosyl-L-homocysteine + H(+). In terms of biological role, catalyzes the formation of 5-methyl-uridine at position 747 (m5U747) in 23S rRNA. This is 23S rRNA (uracil(747)-C(5))-methyltransferase RlmC from Shewanella loihica (strain ATCC BAA-1088 / PV-4).